The following is a 340-amino-acid chain: Cell invasion protein SipD (340 aa).

Disordered stretches follow at residues 1-26 (MLNI…PSAS) and 57-76 (QAQQ…NDER). Positions 291 to 319 (FKAQEENLKTTLQTLTQKYSNANSLYDNL) form a coiled coil.

This sequence belongs to the invasin protein D family.

The protein resides in the secreted. Required for translocation of effector proteins via the type III secretion system SPI-1, which is essential for an efficient bacterial internalization. Probably acts by modulating the secretion of SipA, SipB, and SipC. The polypeptide is Cell invasion protein SipD (sipD) (Salmonella typhi).